Reading from the N-terminus, the 161-residue chain is Nucleotide-binding protein lpl1175 (161 aa).

The protein belongs to the YajQ family.

Functionally, nucleotide-binding protein. This Legionella pneumophila (strain Lens) protein is Nucleotide-binding protein lpl1175.